The chain runs to 319 residues: Tetrahydromethanopterin S-methyltransferase subunit H (319 aa).

This sequence belongs to the MtrH family. As to quaternary structure, the complex is composed of 8 subunits; MtrA, MtrB, MtrC, MtrD, MtrE, MtrF, MtrG and MtrH.

It catalyses the reaction 5-methyl-5,6,7,8-tetrahydromethanopterin + coenzyme M + 2 Na(+)(in) = 5,6,7,8-tetrahydromethanopterin + methyl-coenzyme M + 2 Na(+)(out). Its pathway is one-carbon metabolism; methanogenesis from CO(2); methyl-coenzyme M from 5,10-methylene-5,6,7,8-tetrahydromethanopterin: step 2/2. Part of a complex that catalyzes the formation of methyl-coenzyme M and tetrahydromethanopterin from coenzyme M and methyl-tetrahydromethanopterin. This is an energy-conserving, sodium-ion translocating step. MtrH catalyzes the transfer of the methyl group from methyl-tetrahydromethanopterin to the corrinoid prosthetic group of MtrA. The chain is Tetrahydromethanopterin S-methyltransferase subunit H from Methanococcus aeolicus (strain ATCC BAA-1280 / DSM 17508 / OCM 812 / Nankai-3).